The chain runs to 332 residues: L-lactate dehydrogenase A chain (332 aa).

NAD(+) contacts are provided by residues 29 to 57 (GAVGMACAISILMKDLADELALVDVVEDK) and arginine 99. Substrate is bound by residues arginine 106, asparagine 138, and arginine 169. Position 138 (asparagine 138) interacts with NAD(+). The active-site Proton acceptor is histidine 193. Threonine 248 serves as a coordination point for substrate.

It belongs to the LDH/MDH superfamily. LDH family. In terms of assembly, homotetramer.

Its subcellular location is the cytoplasm. It carries out the reaction (S)-lactate + NAD(+) = pyruvate + NADH + H(+). The protein operates within fermentation; pyruvate fermentation to lactate; (S)-lactate from pyruvate: step 1/1. In terms of biological role, interconverts simultaneously and stereospecifically pyruvate and lactate with concomitant interconversion of NADH and NAD(+). This chain is L-lactate dehydrogenase A chain (LDHA), found in Caiman crocodilus apaporiensis (Rio Apaporis caiman).